The primary structure comprises 207 residues: Zinc finger protein 487 (207 aa).

One can recognise a KRAB domain in the interval 1 to 43; sequence MLENYSLLLSVGYCITKPEVVCKLEHGQVLWILEEESPSQSHL. The C2H2-type; atypical zinc finger occupies 177–202; that stretch reads KQCFEYNQCGKAFHEEAACSTHKRVC.

Belongs to the krueppel C2H2-type zinc-finger protein family.

Its subcellular location is the nucleus. Functionally, may be involved in transcriptional regulation. This is Zinc finger protein 487 (ZNF487) from Homo sapiens (Human).